The sequence spans 122 residues: MIQMQTILNVADNSGAKKVMCIKVLGGTHHMIAHLGDVIVVSIKSSIPKGKVKKGEVCKALIIRTKCGVTRSDGSNIKFDSNDVVLLNKQGEPFGTRIFGSVPRELRVKKFSKIVSLAEEVL.

This sequence belongs to the universal ribosomal protein uL14 family. As to quaternary structure, part of the 50S ribosomal subunit. Forms a cluster with proteins L3 and L19. In the 70S ribosome, L14 and L19 interact and together make contacts with the 16S rRNA in bridges B5 and B8.

In terms of biological role, binds to 23S rRNA. Forms part of two intersubunit bridges in the 70S ribosome. The protein is Large ribosomal subunit protein uL14 of Orientia tsutsugamushi (strain Boryong) (Rickettsia tsutsugamushi).